Reading from the N-terminus, the 590-residue chain is Aspartate--tRNA(Asp/Asn) ligase (590 aa).

Residue Glu-176 participates in L-aspartate binding. Residues 200–203 (QLFK) are aspartate. L-aspartate is bound by residues Arg-222 and His-451. Position 222 to 224 (222 to 224 (RDE)) interacts with ATP. Residue Glu-485 coordinates ATP. Arg-492 serves as a coordination point for L-aspartate. ATP is bound at residue 537 to 540 (GIDR).

The protein belongs to the class-II aminoacyl-tRNA synthetase family. Type 1 subfamily. In terms of assembly, homodimer.

It localises to the cytoplasm. The catalysed reaction is tRNA(Asx) + L-aspartate + ATP = L-aspartyl-tRNA(Asx) + AMP + diphosphate. In terms of biological role, aspartyl-tRNA synthetase with relaxed tRNA specificity since it is able to aspartylate not only its cognate tRNA(Asp) but also tRNA(Asn). Reaction proceeds in two steps: L-aspartate is first activated by ATP to form Asp-AMP and then transferred to the acceptor end of tRNA(Asp/Asn). The protein is Aspartate--tRNA(Asp/Asn) ligase of Ehrlichia canis (strain Jake).